The chain runs to 311 residues: Methionyl-tRNA formyltransferase (311 aa).

A (6S)-5,6,7,8-tetrahydrofolate-binding site is contributed by serine 110 to proline 113.

The protein belongs to the Fmt family.

The catalysed reaction is L-methionyl-tRNA(fMet) + (6R)-10-formyltetrahydrofolate = N-formyl-L-methionyl-tRNA(fMet) + (6S)-5,6,7,8-tetrahydrofolate + H(+). Its function is as follows. Attaches a formyl group to the free amino group of methionyl-tRNA(fMet). The formyl group appears to play a dual role in the initiator identity of N-formylmethionyl-tRNA by promoting its recognition by IF2 and preventing the misappropriation of this tRNA by the elongation apparatus. The chain is Methionyl-tRNA formyltransferase from Streptococcus mutans serotype c (strain ATCC 700610 / UA159).